The sequence spans 430 residues: Zinc carboxypeptidase A 1 (430 aa).

A signal peptide spans 1 to 22; it reads MSLNKCLLFALLAIVASASVSA. A Peptidase M14 domain is found at 124–423; that stretch reads QYYELDDTYA…DSIVAMATEV (300 aa). Histidine 187 and glutamate 190 together coordinate Zn(2+). A disulfide bond links cysteine 252 and cysteine 275. Zn(2+) is bound at residue histidine 311. Glutamate 386 (proton donor/acceptor) is an active-site residue.

Belongs to the peptidase M14 family. Zn(2+) is required as a cofactor.

It is found in the secreted. The polypeptide is Zinc carboxypeptidase A 1 (Drosophila melanogaster (Fruit fly)).